Here is a 170-residue protein sequence, read N- to C-terminus: Protein SprT (170 aa).

One can recognise a SprT-like domain in the interval 19 to 163 (REKLQQANLR…RCLHCGTSLR (145 aa)). His-78 contacts Zn(2+). The active site involves Glu-79. Residue His-82 participates in Zn(2+) binding.

Belongs to the SprT family. The cofactor is Zn(2+).

It is found in the cytoplasm. In Erwinia tasmaniensis (strain DSM 17950 / CFBP 7177 / CIP 109463 / NCPPB 4357 / Et1/99), this protein is Protein SprT.